Here is an 89-residue protein sequence, read N- to C-terminus: Rho beta-crystallin (89 aa).

His-31 contacts substrate.

This sequence belongs to the aldo/keto reductase family. Monomer.

This Lepidodactylus lugubris (Mourning gecko) protein is Rho beta-crystallin.